The sequence spans 368 residues: MWIKELELKHYRNYDHLLASFSSGLNVFIGNNAQGKTNFLEAIYFLSLTRSHRTRADKELIHFDHSTVSLTGKIQRISGTVDLEINLSDKGRVTKINALKQAKLSDYIGTMMVVLFAPEDLQLVKGAPSLRRKFIDIDLGQIKPVYLSELSHYNHVLKQRNSYLKSAQQIDAAFLAVLDEQLAGYGARVMEHRIDFINALEKEANTHHQAISNGLESLSLSYQSSVVFDKKTNIYQQFLHQLEKNHQKDFFRKNTSVGPHRDNLAFYINGMNANFASQGQHRSLILSLKMAEVSLMKALTGDNPILLLDDVMSELDNTRQTKLLETVIKENVQTFITTTSLDHLSQLPEGIRIFHVTKGTVQVDSDIH.

30-37 (GNNAQGKT) lines the ATP pocket.

The protein belongs to the RecF family.

It is found in the cytoplasm. In terms of biological role, the RecF protein is involved in DNA metabolism; it is required for DNA replication and normal SOS inducibility. RecF binds preferentially to single-stranded, linear DNA. It also seems to bind ATP. The sequence is that of DNA replication and repair protein RecF from Streptococcus pyogenes serotype M12 (strain MGAS2096).